Here is a 330-residue protein sequence, read N- to C-terminus: 4-hydroxythreonine-4-phosphate dehydrogenase (330 aa).

Substrate is bound by residues His-133 and Thr-134. The a divalent metal cation site is built by His-163, His-208, and His-263. Lys-271, Asn-280, and Arg-289 together coordinate substrate.

This sequence belongs to the PdxA family. As to quaternary structure, homodimer. The cofactor is Zn(2+). Requires Mg(2+) as cofactor. It depends on Co(2+) as a cofactor.

It is found in the cytoplasm. The enzyme catalyses 4-(phosphooxy)-L-threonine + NAD(+) = 3-amino-2-oxopropyl phosphate + CO2 + NADH. Its pathway is cofactor biosynthesis; pyridoxine 5'-phosphate biosynthesis; pyridoxine 5'-phosphate from D-erythrose 4-phosphate: step 4/5. Catalyzes the NAD(P)-dependent oxidation of 4-(phosphooxy)-L-threonine (HTP) into 2-amino-3-oxo-4-(phosphooxy)butyric acid which spontaneously decarboxylates to form 3-amino-2-oxopropyl phosphate (AHAP). This Azoarcus sp. (strain BH72) protein is 4-hydroxythreonine-4-phosphate dehydrogenase.